Reading from the N-terminus, the 191-residue chain is Auxin-responsive protein IAA32 (191 aa).

The EAR-like (transcriptional repression) signature appears at 32–36 (LGLSL). One can recognise a PB1 domain in the interval 98 to 184 (YAYVKVNLDG…SVDRMRIARR (87 aa)).

It belongs to the Aux/IAA family. In terms of assembly, homodimers and heterodimers.

The protein resides in the nucleus. Its function is as follows. Aux/IAA proteins are short-lived transcriptional factors that function as repressors of early auxin response genes at low auxin concentrations. Repression is thought to result from the interaction with auxin response factors (ARFs), proteins that bind to the auxin-responsive promoter element (AuxRE). Formation of heterodimers with ARF proteins may alter their ability to modulate early auxin response genes expression. In Arabidopsis thaliana (Mouse-ear cress), this protein is Auxin-responsive protein IAA32.